We begin with the raw amino-acid sequence, 281 residues long: Stomatin-4 (281 aa).

Residues 28 to 48 traverse the membrane as a helical segment; sequence WIITIISYLVVLFTLPLSAFF.

Belongs to the band 7/mec-2 family.

Its subcellular location is the membrane. In Caenorhabditis elegans, this protein is Stomatin-4 (sto-4).